Here is a 727-residue protein sequence, read N- to C-terminus: Polyribonucleotide nucleotidyltransferase (727 aa).

Mg(2+)-binding residues include Asp-488 and Asp-494. The region spanning 555-614 (PKLYTMKINPEKIRDVIGKGGATIRALTDETGCQINIEEDGTITIAATEAAKADEAKRRI) is the KH domain. The region spanning 624 to 692 (GKIYEGPVTK…DKGRVKLSMK (69 aa)) is the S1 motif domain. The disordered stretch occupies residues 691–727 (MKALADRPAGDSGRPAPAERGERRERRDGGASEQQQQ). Residues 707-720 (PAERGERRERRDGG) are compositionally biased toward basic and acidic residues.

Belongs to the polyribonucleotide nucleotidyltransferase family. Mg(2+) serves as cofactor.

The protein resides in the cytoplasm. It catalyses the reaction RNA(n+1) + phosphate = RNA(n) + a ribonucleoside 5'-diphosphate. Functionally, involved in mRNA degradation. Catalyzes the phosphorolysis of single-stranded polyribonucleotides processively in the 3'- to 5'-direction. This is Polyribonucleotide nucleotidyltransferase from Acidovorax sp. (strain JS42).